A 321-amino-acid chain; its full sequence is uncharacterized protein (321 aa).

Residues 1–56 (MANIKDIAEKAGVSVTTVSRVINNHPYVSEDKRKRVFEAMESLEYTRNIHAVHLSK) enclose the HTH lacI-type domain. The H-T-H motif DNA-binding region spans 4 to 23 (IKDIAEKAGVSVTTVSRVIN).

This is an uncharacterized protein from Bacillus subtilis (strain 168).